The primary structure comprises 765 residues: Nucleolar transcription factor 1 (765 aa).

Methionine 1 carries the post-translational modification N-acetylmethionine. Residues 1 to 21 (MNGEADCPTDLEMAAPKGQDR) form a disordered region. 2 DNA-binding regions (HMG box) span residues 112–180 (PKKP…ARFR) and 196–264 (PEKP…RDYI). Position 201 is a phosphothreonine (threonine 201). Residues serine 273, serine 336, and serine 364 each carry the phosphoserine modification. Positions 298–362 (TKPPPNSYSL…DYEVELLRFL (65 aa)) form a DNA-binding region, HMG box 3. A compositionally biased stretch (basic and acidic residues) spans 370–379 (QQRVLGEEKM). The tract at residues 370-411 (QQRVLGEEKMLNINKKQTTSPASKKPSQEGGKGGSEKPKRPV) is disordered. Serine 389, serine 412, serine 433, serine 435, serine 484, serine 495, serine 546, serine 584, and serine 638 each carry phosphoserine. 3 consecutive DNA-binding regions (HMG box) follow at residues 407-475 (PKRP…GGER), 482-549 (PESP…SEMR), and 568-634 (KKPP…DLWV). The segment at 456–487 (YKAREAALKAQSERKPGGEREDRGKLPESPKR) is disordered. Basic and acidic residues predominate over residues 457–487 (KAREAALKAQSERKPGGEREDRGKLPESPKR). The interval 546-576 (SEMRAPPAATNSSKKMKFQGEPKKPPMNGYQ) is disordered. Positions 649–765 (ISNKRKNMTK…SGDSSDSGSN (117 aa)) are disordered. The segment covering 664–674 (PKSSRTTLQSK) has biased composition (polar residues). A compositionally biased stretch (acidic residues) spans 677 to 746 (SEEDDDEEEE…DDDEDEDNES (70 aa)). Residues 747 to 765 (EGSSSSSSSSGDSSDSGSN) show a composition bias toward low complexity.

In terms of assembly, homodimer. Part of Pol I pre-initiation complex (PIC), in which Pol I core assembles with RRN3 and promoter-bound UTBF and SL1/TIF-IB complex. Interacts with TOP2A in the context of Pol I complex. Interacts with TBP. Interacts with TAF1A. Interacts with RASL11A. Binds to IRS1 and PIK3CA. Interacts with DHX33. Interacts with PHF6. Interacts with CEBPA (isoform 1 and isoform 4). Interacts with DDX11. Interacts with NOP53. Interacts with ALKBH2. Phosphorylated and activated by PIK3CA.

The protein localises to the nucleus. Its subcellular location is the nucleolus. Functionally, recognizes the ribosomal RNA gene promoter and activates transcription mediated by RNA polymerase I through cooperative interactions with the transcription factor SL1/TIF-IB complex. It binds specifically to the upstream control element. This Mus musculus (Mouse) protein is Nucleolar transcription factor 1 (Ubtf).